The sequence spans 400 residues: F-box/LRR-repeat protein 14 (400 aa).

The F-box domain maps to 2 to 48 (ETHISCLFPELLAMIFGYLDVRDKGRAAQVCTAWRDAAYHKSVWRGV). The segment at 2 to 48 (ETHISCLFPELLAMIFGYLDVRDKGRAAQVCTAWRDAAYHKSVWRGV) is required for down-regulation of SNAI1. LRR repeat units lie at residues 144 to 163 (GLEVLELGGCSNITNTGLLL), 170 to 191 (RLKSLNLRSCRHLSDVGIGHLA), 203 to 225 (GLEQLTLQDCQKLTDLSLKHISR), 229 to 250 (GLRLLNLSFCGGISDAGLLHLS), and 254 to 275 (SLRSLNLRSCDNISDTGIMHLA).

As to quaternary structure, part of a SCF (SKP1-cullin-F-box) ubiquitin-protein ligase complex. Interacts with SKP1 and CUL1. Interacts with SNAI1; the interaction requires the phosphorylation of the two serine residues in the substrate destruction motif D-S-G-X(2,3,4)-S.

The protein localises to the cytoplasm. Substrate-recognition component of some SCF (SKP1-CUL1-F-box protein)-type E3 ubiquitin-protein ligase complexes. The SCF(FBXL14) complex acts by mediating ubiquitination and subsequent degradation of SNAI1. This chain is F-box/LRR-repeat protein 14 (FBXL14), found in Bos taurus (Bovine).